The sequence spans 325 residues: Capsid protein (325 aa).

The segment at 30–89 (DLRTNPPPTEPPSRKSKLMSTSENKGKQPLHPPPTEGFPKPPPPPSSTPTTPTPPDQTKA) is disordered. The segment covering 59–84 (LHPPPTEGFPKPPPPPSSTPTTPTPP) has biased composition (pro residues).

The protein belongs to the potexviruses coat protein family.

The protein resides in the virion. Required for genome encapsidation. Forms ribonucleoprotein complexes along with TGB1 helicase and viral RNA. The protein is Capsid protein of Citrus (ICRSV).